Here is a 359-residue protein sequence, read N- to C-terminus: Cytoplasmic tRNA 2-thiolation protein 1 (359 aa).

The protein belongs to the TtcA family. CTU1/NCS6/ATPBD3 subfamily. As to quaternary structure, interacts with NCS2 and URM1. May act by forming a heterodimer with NCS2. Component of a large molecular weight complex of more than 250 kDa.

The protein localises to the cytoplasm. Its subcellular location is the mitochondrion. The protein operates within tRNA modification; 5-methoxycarbonylmethyl-2-thiouridine-tRNA biosynthesis. Functionally, plays a central role in 2-thiolation of mcm(5)S(2)U at tRNA wobble positions of tRNA(Lys), tRNA(Glu) and tRNA(Gln). Directly binds tRNAs and probably acts by catalyzing adenylation of tRNAs, an intermediate required for 2-thiolation. It is unclear whether it acts as a sulfurtransferase that transfers sulfur from thiocarboxylated URM1 onto the uridine of tRNAs at wobble position. Prior mcm(5) tRNA modification by the elongator complex is required for 2-thiolation. May also be involved in protein urmylation. The sequence is that of Cytoplasmic tRNA 2-thiolation protein 1 from Saccharomyces cerevisiae (strain RM11-1a) (Baker's yeast).